The sequence spans 358 residues: Ribosomal RNA large subunit methyltransferase M (358 aa).

S-adenosyl-L-methionine contacts are provided by residues serine 183, 216-219 (APGG), aspartate 235, aspartate 255, and aspartate 271. Lysine 300 (proton acceptor) is an active-site residue.

The protein belongs to the class I-like SAM-binding methyltransferase superfamily. RNA methyltransferase RlmE family. RlmM subfamily. In terms of assembly, monomer.

The protein localises to the cytoplasm. The catalysed reaction is cytidine(2498) in 23S rRNA + S-adenosyl-L-methionine = 2'-O-methylcytidine(2498) in 23S rRNA + S-adenosyl-L-homocysteine + H(+). In terms of biological role, catalyzes the 2'-O-methylation at nucleotide C2498 in 23S rRNA. The sequence is that of Ribosomal RNA large subunit methyltransferase M from Pseudomonas fluorescens (strain SBW25).